A 75-amino-acid polypeptide reads, in one-letter code: Disintegrin CTF-II (75 aa).

The 75-residue stretch at 1-75 (ELLEEGEDCY…SDDCPRWNDL (75 aa)) folds into the Disintegrin domain. Intrachain disulfides connect Cys9–Cys24, Cys11–Cys19, Cys18–Cys41, Cys32–Cys38, Cys37–Cys62, and Cys50–Cys69. The Cell attachment site signature appears at 54–56 (RGD).

Belongs to the venom metalloproteinase (M12B) family. P-II subfamily. P-IIa sub-subfamily. As to quaternary structure, monomer (disintegrin). As to expression, expressed by the venom gland.

The protein resides in the secreted. Inhibits fibrinogen interaction with platelet receptors, and inhibits aggregation induced by ADP, thrombin, collagen and platelet-activating factor. Acts by binding to the alpha-IIb/beta-3 (ITGA2B/ITGB3) on the platelet surface. This Protobothrops flavoviridis (Habu) protein is Disintegrin CTF-II.